We begin with the raw amino-acid sequence, 215 residues long: ATP-dependent dethiobiotin synthetase BioD (215 aa).

Asp-13–Val-18 is a binding site for ATP. Thr-17 contributes to the Mg(2+) binding site. Lys-38 is a catalytic residue. Thr-42 serves as a coordination point for substrate. ATP-binding positions include Asp-50, Glu-115–Gly-118, and Asn-175–His-176. The Mg(2+) site is built by Asp-50 and Glu-115.

This sequence belongs to the dethiobiotin synthetase family. As to quaternary structure, homodimer. The cofactor is Mg(2+).

The protein resides in the cytoplasm. The catalysed reaction is (7R,8S)-7,8-diammoniononanoate + CO2 + ATP = (4R,5S)-dethiobiotin + ADP + phosphate + 3 H(+). It functions in the pathway cofactor biosynthesis; biotin biosynthesis; biotin from 7,8-diaminononanoate: step 1/2. Functionally, catalyzes a mechanistically unusual reaction, the ATP-dependent insertion of CO2 between the N7 and N8 nitrogen atoms of 7,8-diaminopelargonic acid (DAPA, also called 7,8-diammoniononanoate) to form a ureido ring. In Neisseria meningitidis serogroup C (strain 053442), this protein is ATP-dependent dethiobiotin synthetase BioD.